The following is a 737-amino-acid chain: ATP-dependent RNA helicase SUV3, mitochondrial (737 aa).

A mitochondrion-targeting transit peptide spans 1–25 (MALVKYSTVFFPLRSLRLFVSIKKA). The 140-residue stretch at 226–365 (EARKIRRHII…KSVLPLVKSI (140 aa)) folds into the Helicase ATP-binding domain. 239–246 (GPTNSGKT) provides a ligand contact to ATP. Residues 390–546 (PIKDGIKGLR…YLKTAVTWPT (157 aa)) enclose the Helicase C-terminal domain.

It belongs to the helicase family. MSU1 and SUV3 are the two components of the mitochondrial degradosome (mtEXO).

It is found in the mitochondrion matrix. It carries out the reaction ATP + H2O = ADP + phosphate + H(+). In terms of biological role, required for intron-independent turnover and processing of mitochondrial RNA. It is a key control element in nuclear-mitochondrial interactions. The polypeptide is ATP-dependent RNA helicase SUV3, mitochondrial (SUV3) (Saccharomyces cerevisiae (strain ATCC 204508 / S288c) (Baker's yeast)).